The chain runs to 124 residues: UPF0102 protein Msil_0293 (124 aa).

The protein belongs to the UPF0102 family.

The protein is UPF0102 protein Msil_0293 of Methylocella silvestris (strain DSM 15510 / CIP 108128 / LMG 27833 / NCIMB 13906 / BL2).